We begin with the raw amino-acid sequence, 117 residues long: Large ribosomal subunit protein uL18 (117 aa).

Belongs to the universal ribosomal protein uL18 family. As to quaternary structure, part of the 50S ribosomal subunit; part of the 5S rRNA/L5/L18/L25 subcomplex. Contacts the 5S and 23S rRNAs.

Its function is as follows. This is one of the proteins that bind and probably mediate the attachment of the 5S RNA into the large ribosomal subunit, where it forms part of the central protuberance. The polypeptide is Large ribosomal subunit protein uL18 (Halorhodospira halophila (strain DSM 244 / SL1) (Ectothiorhodospira halophila (strain DSM 244 / SL1))).